Here is a 169-residue protein sequence, read N- to C-terminus: Gastrula zinc finger protein XlCGF62.1 (169 aa).

C2H2-type zinc fingers lie at residues Phe6–His28, Phe34–His56, Phe62–His84, Phe90–His113, Phe119–His141, and Phe147–His169.

This sequence belongs to the krueppel C2H2-type zinc-finger protein family.

Its subcellular location is the nucleus. May be involved in transcriptional regulation. The sequence is that of Gastrula zinc finger protein XlCGF62.1 from Xenopus laevis (African clawed frog).